A 327-amino-acid chain; its full sequence is Eukaryotic translation initiation factor 3 subunit I (327 aa).

WD repeat units lie at residues 8–49 (GHER…GSYD), 51–89 (HNGA…CIYT), 188–227 (VHRY…KLKQ), 229–268 (KSER…GHFE), and 285–324 (GHFG…LGFT).

This sequence belongs to the eIF-3 subunit I family. In terms of assembly, component of the eukaryotic translation initiation factor 3 (eIF-3) complex.

It localises to the cytoplasm. In terms of biological role, component of the eukaryotic translation initiation factor 3 (eIF-3) complex, which is involved in protein synthesis of a specialized repertoire of mRNAs and, together with other initiation factors, stimulates binding of mRNA and methionyl-tRNAi to the 40S ribosome. The eIF-3 complex specifically targets and initiates translation of a subset of mRNAs involved in cell proliferation. This Caenorhabditis briggsae protein is Eukaryotic translation initiation factor 3 subunit I.